The following is a 68-amino-acid chain: Cytotoxic linear peptide (68 aa).

An N-terminal signal peptide occupies residues 1-23; the sequence is MKTQFAILLIALVLFQMFSQSEA. L36 bears the Leucine amide mark. Positions 40-68 are excised as a propeptide; sequence GLNELDDLDELFDGEISQADIDFLKELMS.

This sequence belongs to the non-disulfide-bridged peptide (NDBP) superfamily. Short antimicrobial peptide (group 4) family. In terms of tissue distribution, expressed by the venom gland.

Its subcellular location is the secreted. The protein resides in the target cell membrane. In terms of biological role, amphipathic peptide that has antibacterial activities. The sequence is that of Cytotoxic linear peptide from Pandinus cavimanus (Tanzanian red clawed scorpion).